A 198-amino-acid chain; its full sequence is Recombination protein RecR (198 aa).

A C4-type zinc finger spans residues 57-72 (CAMCNTFTEHEVCETC). A Toprim domain is found at 80–175 (ALLCVVETPG…KVSRLARGVP (96 aa)).

It belongs to the RecR family.

In terms of biological role, may play a role in DNA repair. It seems to be involved in an RecBC-independent recombinational process of DNA repair. It may act with RecF and RecO. The sequence is that of Recombination protein RecR from Janthinobacterium sp. (strain Marseille) (Minibacterium massiliensis).